The following is a 354-amino-acid chain: Photosystem II protein D1 3 (354 aa).

Transmembrane regions (helical) follow at residues 29–46 (YIGW…TATT), 118–133 (HFLI…EWEL), and 142–156 (WIAV…AATA). His-118 contacts chlorophyll a. A pheophytin a-binding site is contributed by Tyr-126. Asp-170 and Glu-189 together coordinate [CaMn4O5] cluster. The helical transmembrane segment at 197 to 218 (FHQLGVAGVFGGALFSAMHGSL) threads the bilayer. Chlorophyll a is bound at residue His-198. Residues His-215 and 264 to 265 (SF) each bind a quinone. Position 215 (His-215) interacts with Fe cation. His-272 contacts Fe cation. The chain crosses the membrane as a helical span at residues 274 to 288 (FLAAWPVIGIWFTAL). Positions 332, 333, 342, and 344 each coordinate [CaMn4O5] cluster. Positions 345-354 (AVEVAPAVRG) are excised as a propeptide.

Belongs to the reaction center PufL/M/PsbA/D family. As to quaternary structure, PSII is composed of 1 copy each of membrane proteins PsbA, PsbB, PsbC, PsbD, PsbE, PsbF, PsbH, PsbI, PsbJ, PsbK, PsbL, PsbM, PsbT, PsbX, PsbY, PsbZ, Psb30/Ycf12, peripheral proteins PsbO, CyanoQ (PsbQ), PsbU, PsbV and a large number of cofactors. It forms dimeric complexes. It depends on The D1/D2 heterodimer binds P680, chlorophylls that are the primary electron donor of PSII, and subsequent electron acceptors. It shares a non-heme iron and each subunit binds pheophytin, quinone, additional chlorophylls, carotenoids and lipids. D1 provides most of the ligands for the Mn4-Ca-O5 cluster of the oxygen-evolving complex (OEC). There is also a Cl(-1) ion associated with D1 and D2, which is required for oxygen evolution. The PSII complex binds additional chlorophylls, carotenoids and specific lipids. as a cofactor. In terms of processing, tyr-161 forms a radical intermediate that is referred to as redox-active TyrZ, YZ or Y-Z. Post-translationally, C-terminally processed by CtpA; processing is essential to allow assembly of the oxygen-evolving complex and thus photosynthetic growth.

Its subcellular location is the cellular thylakoid membrane. It carries out the reaction 2 a plastoquinone + 4 hnu + 2 H2O = 2 a plastoquinol + O2. In terms of biological role, photosystem II (PSII) is a light-driven water:plastoquinone oxidoreductase that uses light energy to abstract electrons from H(2)O, generating O(2) and a proton gradient subsequently used for ATP formation. It consists of a core antenna complex that captures photons, and an electron transfer chain that converts photonic excitation into a charge separation. The D1/D2 (PsbA/PsbD) reaction center heterodimer binds P680, the primary electron donor of PSII as well as several subsequent electron acceptors. This is Photosystem II protein D1 3 from Synechococcus sp. (strain JA-3-3Ab) (Cyanobacteria bacterium Yellowstone A-Prime).